Here is a 228-residue protein sequence, read N- to C-terminus: 7-cyano-7-deazaguanine synthase (228 aa).

9–19 serves as a coordination point for ATP; it reads LSGGPDSTTVL. Positions 193, 203, 206, and 209 each coordinate Zn(2+).

It belongs to the QueC family. Zn(2+) serves as cofactor.

The enzyme catalyses 7-carboxy-7-deazaguanine + NH4(+) + ATP = 7-cyano-7-deazaguanine + ADP + phosphate + H2O + H(+). It participates in purine metabolism; 7-cyano-7-deazaguanine biosynthesis. In terms of biological role, catalyzes the ATP-dependent conversion of 7-carboxy-7-deazaguanine (CDG) to 7-cyano-7-deazaguanine (preQ(0)). This is 7-cyano-7-deazaguanine synthase from Rickettsia africae (strain ESF-5).